Reading from the N-terminus, the 334-residue chain is MKVRIATYASHSALQILKGAKDEGFETIAFGSSKVKPLYTKYFPVADYFIEEKYPEEELLNLNAVVVPTGSFVAHLGIELVENMKVPYFGNKRVLRWESDRNLERKWLKKAGIRVPEVYEDPDDIEKPVIVKPHGAKGGKGYFLAKDPEDFWRKAEKFLGIKRKEDLKNIQIQEYVLGVPVYPHYFYSKVREELELMSIDRRYESNVDAIGRIPAKDQLEFDMDITYTVIGNIPIVLRESLLMDVIEAGERVVKAAEELMGGLWGPFCLEGVFTPDLEFVVFEISARIVAGTNIFVNGSPYTWLRYDRPVSTGRRIAMEIREAIENDMLEKVLT.

S10, H11, S71, and H75 together coordinate 5-amino-1-(5-phospho-beta-D-ribosyl)imidazole-4-carboxamide. One can recognise an ATP-grasp domain in the interval 78 to 325; the sequence is IELVENMKVP…IAMEIREAIE (248 aa). ATP is bound by residues 132-142, 173-176, and E204; these read KPHGAKGGKGY and QEYV. Residue N232 coordinates 5-amino-1-(5-phospho-beta-D-ribosyl)imidazole-4-carboxamide. Mg(2+) contacts are provided by E270 and E283.

Belongs to the phosphohexose mutase family. As to quaternary structure, homotrimer and homohexamer. The cofactor is Mg(2+). Mn(2+) serves as cofactor.

It catalyses the reaction 5-amino-1-(5-phospho-beta-D-ribosyl)imidazole-4-carboxamide + formate + ATP = 5-formamido-1-(5-phospho-D-ribosyl)imidazole-4-carboxamide + ADP + phosphate. It functions in the pathway purine metabolism; IMP biosynthesis via de novo pathway; 5-formamido-1-(5-phospho-D-ribosyl)imidazole-4-carboxamide from 5-amino-1-(5-phospho-D-ribosyl)imidazole-4-carboxamide (formate route): step 1/1. Its function is as follows. Catalyzes the ATP- and formate-dependent formylation of 5-aminoimidazole-4-carboxamide-1-beta-d-ribofuranosyl 5'-monophosphate (AICAR) to 5-formaminoimidazole-4-carboxamide-1-beta-d-ribofuranosyl 5'-monophosphate (FAICAR) in the absence of folates. The polypeptide is 5-formaminoimidazole-4-carboxamide-1-(beta)-D-ribofuranosyl 5'-monophosphate synthetase (Pyrococcus furiosus (strain ATCC 43587 / DSM 3638 / JCM 8422 / Vc1)).